Reading from the N-terminus, the 311-residue chain is Taste receptor type 2 member 9 (311 aa).

Residues methionine 1–tyrosine 9 are Extracellular-facing. The chain crosses the membrane as a helical span at residues isoleucine 10–cysteine 32. The Cytoplasmic portion of the chain corresponds to isoleucine 33–alanine 52. A helical transmembrane segment spans residues isoleucine 53–phenylalanine 72. Residues proline 73 to aspartate 86 lie on the Extracellular side of the membrane. The chain crosses the membrane as a helical span at residues alanine 87–leucine 109. Over lysine 110–lysine 128 the chain is Cytoplasmic. Residues valine 129–phenylalanine 146 form a helical membrane-spanning segment. At proline 147–glutamine 179 the chain is on the extracellular side. Asparagine 163 carries an N-linked (GlcNAc...) asparagine glycan. Residues leucine 180–phenylalanine 202 form a helical membrane-spanning segment. At serine 203–valine 233 the chain is on the cytoplasmic side. A helical membrane pass occupies residues isoleucine 234–isoleucine 256. Residues proline 257–lysine 260 are Extracellular-facing. The chain crosses the membrane as a helical span at residues leucine 261–methionine 283. Residues glycine 284–proline 311 lie on the Cytoplasmic side of the membrane.

This sequence belongs to the G-protein coupled receptor T2R family.

It localises to the membrane. Its function is as follows. Gustducin-coupled receptor implicated in the perception of bitter compounds in the oral cavity and the gastrointestinal tract. Signals through PLCB2 and the calcium-regulated cation channel TRPM5. This chain is Taste receptor type 2 member 9 (TAS2R9), found in Papio hamadryas (Hamadryas baboon).